The following is a 78-amino-acid chain: MDTASVIIDLTVSSLGGYNKCLNIKHAKSQCRPSSLLISSLENVSPGIRPRFLSQNMEANDPEKKIPSTAAKAISLSP.

Residues 58 to 78 form a disordered region; sequence EANDPEKKIPSTAAKAISLSP.

This is an uncharacterized protein from Vaccinia virus (strain Copenhagen) (VACV).